A 341-amino-acid polypeptide reads, in one-letter code: Phosphoribosylformylglycinamidine cyclo-ligase (341 aa).

The protein belongs to the AIR synthase family.

The protein localises to the cytoplasm. The enzyme catalyses 2-formamido-N(1)-(5-O-phospho-beta-D-ribosyl)acetamidine + ATP = 5-amino-1-(5-phospho-beta-D-ribosyl)imidazole + ADP + phosphate + H(+). It participates in purine metabolism; IMP biosynthesis via de novo pathway; 5-amino-1-(5-phospho-D-ribosyl)imidazole from N(2)-formyl-N(1)-(5-phospho-D-ribosyl)glycinamide: step 2/2. This is Phosphoribosylformylglycinamidine cyclo-ligase from Finegoldia magna (strain ATCC 29328 / DSM 20472 / WAL 2508) (Peptostreptococcus magnus).